Consider the following 301-residue polypeptide: Type II restriction enzyme BslI subunit beta (301 aa).

The CHC2-type zinc-finger motif lies at 62–82 (CPDGHTKWNQNLTKEMTCSEC).

Heterotetramer of two alpha and two beta subunits. The alpha subunit is believed to be responsible for DNA recognition, while the beta subunit is thought to mediate cleavage. Zn(2+) is required as a cofactor.

It catalyses the reaction Endonucleolytic cleavage of DNA to give specific double-stranded fragments with terminal 5'-phosphates.. Functionally, a P subtype restriction enzyme that recognizes the double-stranded sequence 5'-CCN(7)GG-3' and cleaves after N-7. This is Type II restriction enzyme BslI subunit beta from Bacillus sp. (strain NEB-606).